We begin with the raw amino-acid sequence, 498 residues long: Glutamate--tRNA ligase (498 aa).

The 'HIGH' region signature appears at 11 to 21 (PSPTGHLHIGN). A 'KMSKS' region motif is present at residues 260 to 264 (KLSKR). Residue Lys-263 coordinates ATP.

This sequence belongs to the class-I aminoacyl-tRNA synthetase family. Glutamate--tRNA ligase type 1 subfamily. As to quaternary structure, monomer.

The protein localises to the cytoplasm. The enzyme catalyses tRNA(Glu) + L-glutamate + ATP = L-glutamyl-tRNA(Glu) + AMP + diphosphate. Its function is as follows. Catalyzes the attachment of glutamate to tRNA(Glu) in a two-step reaction: glutamate is first activated by ATP to form Glu-AMP and then transferred to the acceptor end of tRNA(Glu). The polypeptide is Glutamate--tRNA ligase (Leuconostoc mesenteroides subsp. mesenteroides (strain ATCC 8293 / DSM 20343 / BCRC 11652 / CCM 1803 / JCM 6124 / NCDO 523 / NBRC 100496 / NCIMB 8023 / NCTC 12954 / NRRL B-1118 / 37Y)).